We begin with the raw amino-acid sequence, 344 residues long: Calcium homeostasis modulator protein 3 (344 aa).

Residues 1–20 are Cytoplasmic-facing; it reads MDKFRMLFQHFQSSSESVMN. A central pore region spans residues 9-36; sequence QHFQSSSESVMNGICLLLAAVTVKLYSS. The helical transmembrane segment at 21-36 threads the bilayer; the sequence is GICLLLAAVTVKLYSS. The Extracellular segment spans residues 37-48; that stretch reads FDFNCPCLVHYN. Disulfide bonds link cysteine 41/cysteine 126 and cysteine 43/cysteine 157. A helical transmembrane segment spans residues 49–71; that stretch reads ALYGLGLLLTPPLALFLCGLLAN. Residues 72–98 lie on the Cytoplasmic side of the membrane; that stretch reads RQSVVMVEEWRRPAGHRRKDPGIIRYM. Cysteine 99 is lipidated: S-palmitoyl cysteine. The helical transmembrane segment at 99–124 threads the bilayer; it reads CSSVLQRALAAPLVWILLALLDGKCF. Residues 125-176 lie on the Extracellular side of the membrane; the sequence is VCAFSSSVDPEKFLDFANMTPSQVQLFLAKVPCKEDELVRDSPARKAVSRYL. The N-linked (GlcNAc...) asparagine glycan is linked to asparagine 142. A helical membrane pass occupies residues 177 to 202; sequence RCLSQAIGWSVTLLLIIAAFLARCLR. S-palmitoyl cysteine attachment occurs at residues cysteine 200 and cysteine 204. Residues 203–344 are Cytoplasmic-facing; it reads PCFDQTVFLQ…GTRLSQHTDV (142 aa).

Belongs to the CALHM family. As to quaternary structure, associates with CALHM1 as a pore-forming subunit in a hetero-hexameric channel complex. Post-translationally, N-glycosylated. In terms of processing, palmitoylated by ZDHHC3 and ZDHHC15. Palmitoylation positively regulates CALHM1:CALHM3 channel conductance. As to expression, specifically expressed in circumvallate taste bud cells.

It is found in the basolateral cell membrane. The catalysed reaction is ATP(in) = ATP(out). The enzyme catalyses Ca(2+)(in) = Ca(2+)(out). It catalyses the reaction Na(+)(in) = Na(+)(out). It carries out the reaction K(+)(in) = K(+)(out). The catalysed reaction is chloride(in) = chloride(out). Functionally, pore-forming subunit of gustatory voltage-gated ion channels required for sensory perception of sweet, bitter and umami tastes. With CALHM1 forms a fast-activating voltage-gated ATP-release channel in type II taste bud cells, ATP acting as a neurotransmitter to activate afferent neural gustatory pathways. Acts both as a voltage-gated and calcium-activated ion channel: mediates neuronal excitability in response to membrane depolarization and low extracellular Ca(2+) concentration. Has poor ion selectivity and forms a wide pore (around 14 Angstroms) that mediates permeation of small ions including Ca(2+), Na(+), K(+) and Cl(-), as well as larger ions such as ATP(4-). The polypeptide is Calcium homeostasis modulator protein 3 (Homo sapiens (Human)).